The primary structure comprises 316 residues: 4-hydroxy-3-methylbut-2-enyl diphosphate reductase (316 aa).

Cys-12 serves as a coordination point for [4Fe-4S] cluster. (2E)-4-hydroxy-3-methylbut-2-enyl diphosphate contacts are provided by His-41 and His-74. Dimethylallyl diphosphate-binding residues include His-41 and His-74. The isopentenyl diphosphate site is built by His-41 and His-74. Cys-96 provides a ligand contact to [4Fe-4S] cluster. His-124 provides a ligand contact to (2E)-4-hydroxy-3-methylbut-2-enyl diphosphate. His-124 contacts dimethylallyl diphosphate. Residue His-124 participates in isopentenyl diphosphate binding. The active-site Proton donor is the Glu-126. Position 167 (Thr-167) interacts with (2E)-4-hydroxy-3-methylbut-2-enyl diphosphate. Cys-197 provides a ligand contact to [4Fe-4S] cluster. The (2E)-4-hydroxy-3-methylbut-2-enyl diphosphate site is built by Ser-225, Ser-226, Asn-227, and Ser-269. Dimethylallyl diphosphate is bound by residues Ser-225, Ser-226, Asn-227, and Ser-269. 4 residues coordinate isopentenyl diphosphate: Ser-225, Ser-226, Asn-227, and Ser-269.

The protein belongs to the IspH family. In terms of assembly, homodimer. Requires [4Fe-4S] cluster as cofactor.

It carries out the reaction isopentenyl diphosphate + 2 oxidized [2Fe-2S]-[ferredoxin] + H2O = (2E)-4-hydroxy-3-methylbut-2-enyl diphosphate + 2 reduced [2Fe-2S]-[ferredoxin] + 2 H(+). The catalysed reaction is dimethylallyl diphosphate + 2 oxidized [2Fe-2S]-[ferredoxin] + H2O = (2E)-4-hydroxy-3-methylbut-2-enyl diphosphate + 2 reduced [2Fe-2S]-[ferredoxin] + 2 H(+). It functions in the pathway isoprenoid biosynthesis; dimethylallyl diphosphate biosynthesis; dimethylallyl diphosphate from (2E)-4-hydroxy-3-methylbutenyl diphosphate: step 1/1. Its pathway is isoprenoid biosynthesis; isopentenyl diphosphate biosynthesis via DXP pathway; isopentenyl diphosphate from 1-deoxy-D-xylulose 5-phosphate: step 6/6. Its function is as follows. Catalyzes the conversion of 1-hydroxy-2-methyl-2-(E)-butenyl 4-diphosphate (HMBPP) into a mixture of isopentenyl diphosphate (IPP) and dimethylallyl diphosphate (DMAPP). Acts in the terminal step of the DOXP/MEP pathway for isoprenoid precursor biosynthesis. This Salmonella typhi protein is 4-hydroxy-3-methylbut-2-enyl diphosphate reductase.